A 340-amino-acid chain; its full sequence is Glycerol-3-phosphate dehydrogenase [NAD(P)+] (340 aa).

Positions 13, 14, and 108 each coordinate NADPH. Positions 108, 137, and 139 each coordinate sn-glycerol 3-phosphate. Ala141 is a binding site for NADPH. Sn-glycerol 3-phosphate is bound by residues Lys193, Asp246, Ser256, Arg257, and Asn258. Lys193 functions as the Proton acceptor in the catalytic mechanism. An NADPH-binding site is contributed by Arg257. The NADPH site is built by Ile281 and Glu283.

Belongs to the NAD-dependent glycerol-3-phosphate dehydrogenase family.

It localises to the cytoplasm. It carries out the reaction sn-glycerol 3-phosphate + NAD(+) = dihydroxyacetone phosphate + NADH + H(+). The catalysed reaction is sn-glycerol 3-phosphate + NADP(+) = dihydroxyacetone phosphate + NADPH + H(+). It participates in membrane lipid metabolism; glycerophospholipid metabolism. Its function is as follows. Catalyzes the reduction of the glycolytic intermediate dihydroxyacetone phosphate (DHAP) to sn-glycerol 3-phosphate (G3P), the key precursor for phospholipid synthesis. This is Glycerol-3-phosphate dehydrogenase [NAD(P)+] from Bartonella quintana (strain Toulouse) (Rochalimaea quintana).